The primary structure comprises 406 residues: COP9 signalosome complex subunit 4 (406 aa).

The residue at position 2 (Ala2) is an N-acetylalanine. Lys25 is subject to N6-acetyllysine. Residues Tyr197–Ala366 enclose the PCI domain.

It belongs to the CSN4 family. In terms of assembly, component of the CSN complex, composed of COPS1/GPS1, COPS2, COPS3, COPS4, COPS5, COPS6, COPS7 (COPS7A or COPS7B), COPS8 and COPS9. In the complex, it probably interacts directly with COPS1, COPS2, COPS3, COPS5, COPS6, COPS7 (COPS7A or COPS7B) and COPS8. Interacts with TOR1A; the interaction is direct and associates TOR1A and SNAPIN with the CSN complex. Interacts with STON2; controls STON2 neddylation levels. Interacts with ERCC6.

It localises to the cytoplasm. The protein localises to the nucleus. The protein resides in the cytoplasmic vesicle. It is found in the secretory vesicle. Its subcellular location is the synaptic vesicle. Its function is as follows. Component of the COP9 signalosome complex (CSN), a complex involved in various cellular and developmental processes. The CSN complex is an essential regulator of the ubiquitin (Ubl) conjugation pathway by mediating the deneddylation of the cullin subunits of SCF-type E3 ligase complexes, leading to decrease the Ubl ligase activity of SCF-type complexes such as SCF, CSA or DDB2. Also involved in the deneddylation of non-cullin subunits such as STON2. The complex is also involved in phosphorylation of p53/TP53, c-jun/JUN, IkappaBalpha/NFKBIA, ITPK1, IRF8/ICSBP and SNAPIN, possibly via its association with CK2 and PKD kinases. CSN-dependent phosphorylation of TP53 and JUN promotes and protects degradation by the Ubl system, respectively. The protein is COP9 signalosome complex subunit 4 (Cops4) of Rattus norvegicus (Rat).